A 242-amino-acid polypeptide reads, in one-letter code: C-reactive protein 1.4 (242 aa).

Residues 1–24 (MKTFHGPTFGTAVFLYLLLFLTSA) form the signal peptide. In terms of domain architecture, Pentraxin (PTX) spans 30 to 241 (ITSKVKFPPS…GVVLSPNEIC (212 aa)). T60 and Y63 together coordinate phosphocholine. Cystine bridges form between C62/C125 and C112/C144. D85 and N86 together coordinate Ca(2+). An N-linked (GlcNAc...) asparagine glycan is attached at N147. Residues E168, Q169, D170, and Q180 each contribute to the Ca(2+) site. C207 and C241 are disulfide-bonded.

This sequence belongs to the pentraxin family. In terms of assembly, homopentamer. Pentraxin (or pentaxin) have a discoid arrangement of 5 non-covalently bound subunits. It depends on Ca(2+) as a cofactor.

The protein resides in the secreted. Functionally, might serve the role of immunoglobulins. In Limulus polyphemus (Atlantic horseshoe crab), this protein is C-reactive protein 1.4.